The primary structure comprises 20 residues: Chemoheterotroph-specific protein (20 aa).

The sequence is that of Chemoheterotroph-specific protein from Thiomonas delicata (Thiomonas cuprina).